A 113-amino-acid chain; its full sequence is Hydrogenase maturation factor HypA (113 aa).

His-2 lines the Ni(2+) pocket. Zn(2+) contacts are provided by Cys-73, Cys-76, Cys-89, and Cys-92.

It belongs to the HypA/HybF family.

Functionally, involved in the maturation of [NiFe] hydrogenases. Required for nickel insertion into the metal center of the hydrogenase. The polypeptide is Hydrogenase maturation factor HypA (Albidiferax ferrireducens (strain ATCC BAA-621 / DSM 15236 / T118) (Rhodoferax ferrireducens)).